The primary structure comprises 352 residues: Isopentenyl-diphosphate delta-isomerase (352 aa).

Residue 6–7 (RK) coordinates substrate. Residues 63–65 (AMT), Ser93, and Asn122 contribute to the FMN site. 93-95 (SQR) is a substrate binding site. Gln160 contributes to the substrate binding site. Glu161 is a binding site for Mg(2+). Residues Lys192, Thr221, 271–273 (GIR), and 292–293 (SQ) contribute to the FMN site.

It belongs to the IPP isomerase type 2 family. In terms of assembly, homooctamer. Dimer of tetramers. The cofactor is FMN. NADPH serves as cofactor. Mg(2+) is required as a cofactor.

Its subcellular location is the cytoplasm. It carries out the reaction isopentenyl diphosphate = dimethylallyl diphosphate. In terms of biological role, involved in the biosynthesis of isoprenoids. Catalyzes the 1,3-allylic rearrangement of the homoallylic substrate isopentenyl (IPP) to its allylic isomer, dimethylallyl diphosphate (DMAPP). In Pyrobaculum aerophilum (strain ATCC 51768 / DSM 7523 / JCM 9630 / CIP 104966 / NBRC 100827 / IM2), this protein is Isopentenyl-diphosphate delta-isomerase.